The sequence spans 89 residues: MTEAKKSLKRTLVGKVVSDKRAKTVTVLVERRVKHPIYDKIMIKSSKYHAHDENGEYKMGDTIEITESRPLSKTKNWVATRLVQKAGLL.

This sequence belongs to the universal ribosomal protein uS17 family. As to quaternary structure, part of the 30S ribosomal subunit.

In terms of biological role, one of the primary rRNA binding proteins, it binds specifically to the 5'-end of 16S ribosomal RNA. This chain is Small ribosomal subunit protein uS17, found in Acidovorax ebreus (strain TPSY) (Diaphorobacter sp. (strain TPSY)).